Reading from the N-terminus, the 527-residue chain is G patch domain-containing protein 2 (527 aa).

The interval 35 to 135 (LEESSEQARG…RPSSNLSSSV (101 aa)) is disordered. Positions 62 to 76 (RQARKRRGRKRRSYN) are enriched in basic residues. Over residues 97-116 (EPSKDYREKHSNNKKDRSDS) the composition is skewed to basic and acidic residues. Residues Ser114, Ser116, and Ser145 each carry the phosphoserine modification. Disordered regions lie at residues 175 to 281 (SSKR…GDDE), 350 to 375 (TPSKNIKKSSGAPPSMLSAPGPGSNK), and 480 to 527 (TPGS…GNPA). Basic and acidic residues predominate over residues 186–196 (GCRDQDMDNDR). Over residues 206–215 (KKVKKRKLKG) the composition is skewed to basic residues. Over residues 231 to 257 (SEERSQPNKDRMEYEEQKASDELRSES) the composition is skewed to basic and acidic residues. One can recognise a G-patch domain in the interval 466 to 512 (ESNIGNRMLQSMGWTPGSGLGRDGRGIAEPVQAVQRPKGLGLGFPLP). Over residues 510–527 (PLPKSSPTSPAPTSGNPA) the composition is skewed to low complexity.

In terms of assembly, interacts with DHX15.

It is found in the nucleus speckle. The protein resides in the nucleus. The protein localises to the nucleolus. Functionally, enhances the ATPase activity of DHX15 in vitro. This chain is G patch domain-containing protein 2 (Gpatch2), found in Mus musculus (Mouse).